Reading from the N-terminus, the 953-residue chain is Isoleucine--tRNA ligase (953 aa).

Residues 58 to 68 (PYANGNIHLGH) carry the 'HIGH' region motif. L-isoleucyl-5'-AMP is bound at residue glutamate 565. The 'KMSKS' region motif lies at 606–610 (KMSKS). Lysine 609 is an ATP binding site. Zn(2+) contacts are provided by cysteine 916, cysteine 919, cysteine 936, and cysteine 939.

Belongs to the class-I aminoacyl-tRNA synthetase family. IleS type 1 subfamily. Monomer. The cofactor is Zn(2+).

The protein resides in the cytoplasm. The enzyme catalyses tRNA(Ile) + L-isoleucine + ATP = L-isoleucyl-tRNA(Ile) + AMP + diphosphate. Functionally, catalyzes the attachment of isoleucine to tRNA(Ile). As IleRS can inadvertently accommodate and process structurally similar amino acids such as valine, to avoid such errors it has two additional distinct tRNA(Ile)-dependent editing activities. One activity is designated as 'pretransfer' editing and involves the hydrolysis of activated Val-AMP. The other activity is designated 'posttransfer' editing and involves deacylation of mischarged Val-tRNA(Ile). The protein is Isoleucine--tRNA ligase of Colwellia psychrerythraea (strain 34H / ATCC BAA-681) (Vibrio psychroerythus).